Consider the following 776-residue polypeptide: Kinesin-like protein KLP1 (776 aa).

One can recognise a Kinesin motor domain in the interval 5 to 335 (AVKVFVRTRP…LRFASRVRTL (331 aa)). 91 to 98 (GQTGAGKT) contacts ATP. Positions 348–371 (ALLLRRYERQIKELKAELAMRDTL) form a coiled coil. The disordered stretch occupies residues 441–535 (RRATEEGSGA…SNWGDAGPLS (95 aa)). The span at 447–460 (GSGAAARGGDSAGP) shows a compositional bias: low complexity. The stretch at 579–657 (ALADTKASIR…SLKSAREELE (79 aa)) forms a coiled coil. A globular region spans residues 658–776 (PQIQAVAVAR…TQAVNRGLAR (119 aa)).

Belongs to the TRAFAC class myosin-kinesin ATPase superfamily. Kinesin family.

The protein localises to the cytoplasm. It is found in the cytoskeleton. It localises to the flagellum axoneme. May play a role in rotation or twisting of the central pair microtubules of the flagella axoneme. This chain is Kinesin-like protein KLP1 (KLP1), found in Chlamydomonas reinhardtii (Chlamydomonas smithii).